Here is a 202-residue protein sequence, read N- to C-terminus: LexA repressor (202 aa).

The segment at residues 28–48 is a DNA-binding region (H-T-H motif); sequence RAEIAQRLGFRSPNAAEEHLK. Active-site for autocatalytic cleavage activity residues include S119 and K156.

Belongs to the peptidase S24 family. Homodimer.

The enzyme catalyses Hydrolysis of Ala-|-Gly bond in repressor LexA.. Functionally, represses a number of genes involved in the response to DNA damage (SOS response), including recA and lexA. Binds to the 16 bp palindromic sequence 5'-CTGTATATATATACAG-3'. In the presence of single-stranded DNA, RecA interacts with LexA causing an autocatalytic cleavage which disrupts the DNA-binding part of LexA, leading to derepression of the SOS regulon and eventually DNA repair. This chain is LexA repressor, found in Salmonella agona (strain SL483).